Reading from the N-terminus, the 78-residue chain is U-scoloptoxin(04)-Er1e (78 aa).

Residues Met1–Ala24 form the signal peptide. The propeptide occupies Arg25–Arg28.

This sequence belongs to the scoloptoxin-04 family. Contains 2 disulfide bonds. In terms of tissue distribution, expressed by the venom gland.

Its subcellular location is the secreted. The polypeptide is U-scoloptoxin(04)-Er1e (Ethmostigmus rubripes (Giant centipede)).